Consider the following 155-residue polypeptide: Putative pre-16S rRNA nuclease (155 aa).

The protein belongs to the YqgF nuclease family.

The protein localises to the cytoplasm. Its function is as follows. Could be a nuclease involved in processing of the 5'-end of pre-16S rRNA. This chain is Putative pre-16S rRNA nuclease, found in Wolbachia pipientis wMel.